A 232-amino-acid chain; its full sequence is Venom allergen 5 (232 aa).

An N-terminal signal peptide occupies residues 1-23 (MEQIKYLLIGIIFSSAISSSLQC). Cystine bridges form between Cys-28–Cys-43, Cys-54–Cys-119, and Cys-198–Cys-215. An SCP domain is found at 71 to 217 (LQLHNELRAK…FYTTMVACNY (147 aa)).

This sequence belongs to the CRISP family. Venom allergen 5-like subfamily. Expressed by the venom gland.

The protein localises to the secreted. This Microctonus hyperodae (Parasitoid wasp) protein is Venom allergen 5.